We begin with the raw amino-acid sequence, 650 residues long: 1-deoxy-D-xylulose-5-phosphate synthase (650 aa).

The segment covering Met-1–His-13 has biased composition (basic and acidic residues). Residues Met-1 to Leu-23 form a disordered region. Residues His-92 and Ala-133–Ser-135 contribute to the thiamine diphosphate site. Position 164 (Asp-164) interacts with Mg(2+). Thiamine diphosphate-binding positions include Gly-165 to Ala-166, Asn-193, Tyr-302, and Glu-384. Asn-193 contacts Mg(2+).

It belongs to the transketolase family. DXPS subfamily. In terms of assembly, homodimer. Requires Mg(2+) as cofactor. Thiamine diphosphate serves as cofactor.

The enzyme catalyses D-glyceraldehyde 3-phosphate + pyruvate + H(+) = 1-deoxy-D-xylulose 5-phosphate + CO2. It functions in the pathway metabolic intermediate biosynthesis; 1-deoxy-D-xylulose 5-phosphate biosynthesis; 1-deoxy-D-xylulose 5-phosphate from D-glyceraldehyde 3-phosphate and pyruvate: step 1/1. Catalyzes the acyloin condensation reaction between C atoms 2 and 3 of pyruvate and glyceraldehyde 3-phosphate to yield 1-deoxy-D-xylulose-5-phosphate (DXP). This is 1-deoxy-D-xylulose-5-phosphate synthase from Chelativorans sp. (strain BNC1).